The sequence spans 89 residues: Elongation factor 1-beta (89 aa).

The protein belongs to the EF-1-beta/EF-1-delta family.

Promotes the exchange of GDP for GTP in EF-1-alpha/GDP, thus allowing the regeneration of EF-1-alpha/GTP that could then be used to form the ternary complex EF-1-alpha/GTP/AAtRNA. The sequence is that of Elongation factor 1-beta from Methanococcus maripaludis (strain C7 / ATCC BAA-1331).